Reading from the N-terminus, the 671-residue chain is Kinesin-like protein KIF2C (671 aa).

A globular region spans residues 1–200 (MIDFDDVAAI…CHPLTMTDPI (200 aa)). Residues 36–62 (KQKRRSVNSKIPAPKESLRTRSTRMST) form a disordered region. A Phosphoserine; by AURKB modification is found at serine 41. The short motif at 44–47 (SKIP) is the Microtubule tip localization signal element. Phosphoserine is present on residues serine 52, serine 57, serine 61, serine 112, serine 121, serine 133, and serine 138. The segment at 153–184 (EKKAQNSEMRMKRAQEYDSSFPNWEFARMIKE) is negative regulator of microtubule-binding. Intrachain disulfides connect cysteine 191–cysteine 233 and cysteine 290–cysteine 506. One can recognise a Kinesin motor domain in the interval 204–534 (RICVCVRKRP…LRYADRVKEL (331 aa)). Position 294 to 301 (294 to 301 (GQTGSGKT)) interacts with ATP. Phosphoserine is present on residues serine 465, serine 567, and serine 579. A coiled-coil region spans residues 564 to 604 (GNLSKEEEELSSQMSSFNEAMTQIRELEERAVEELKEIIQQ).

It belongs to the TRAFAC class myosin-kinesin ATPase superfamily. Kinesin family. MCAK/KIF2 subfamily. As to quaternary structure, interacts with CENPH. Interacts with MTUS2/TIP150; the interaction is direct. Interacts with MAPRE1; the interaction is direct, regulated by phosphorylation and is probably required for targeting to growing microtubule plus ends. Interacts with KIF18B at microtubule tips; this interaction increases the affinity of both partners for microtubule plus ends and is required for robust microtubule depolymerization. Phosphorylation by AURKA or AURKB strongly reduces KIF18B-binding. Post-translationally, phosphorylation by AURKB, regulates association with centromeres and kinetochores and the microtubule depolymerization activity. Ubiquitinated.

The protein localises to the cytoplasm. It localises to the cytoskeleton. The protein resides in the nucleus. It is found in the chromosome. Its subcellular location is the centromere. The protein localises to the kinetochore. In terms of biological role, in complex with KIF18B, constitutes the major microtubule plus-end depolymerizing activity in mitotic cells. Regulates the turnover of microtubules at the kinetochore and functions in chromosome segregation during mitosis. Plays a role in chromosome congression and is required for the lateral to end-on conversion of the chromosome-microtubule attachment. The polypeptide is Kinesin-like protein KIF2C (KIF2C) (Macaca fascicularis (Crab-eating macaque)).